The following is a 293-amino-acid chain: Acetyl-coenzyme A carboxylase carboxyl transferase subunit beta (293 aa).

Residues 29–293 (LWRKCPRCEG…MGWPPLALDD (265 aa)) enclose the CoA carboxyltransferase N-terminal domain. Zn(2+)-binding residues include Cys-33, Cys-36, Cys-52, and Cys-55. The C4-type zinc finger occupies 33-55 (CPRCEGVVYRPELDRNMDVCPKC).

The protein belongs to the AccD/PCCB family. As to quaternary structure, acetyl-CoA carboxylase is a heterohexamer composed of biotin carboxyl carrier protein (AccB), biotin carboxylase (AccC) and two subunits each of ACCase subunit alpha (AccA) and ACCase subunit beta (AccD). Zn(2+) serves as cofactor.

Its subcellular location is the cytoplasm. The catalysed reaction is N(6)-carboxybiotinyl-L-lysyl-[protein] + acetyl-CoA = N(6)-biotinyl-L-lysyl-[protein] + malonyl-CoA. The protein operates within lipid metabolism; malonyl-CoA biosynthesis; malonyl-CoA from acetyl-CoA: step 1/1. Its function is as follows. Component of the acetyl coenzyme A carboxylase (ACC) complex. Biotin carboxylase (BC) catalyzes the carboxylation of biotin on its carrier protein (BCCP) and then the CO(2) group is transferred by the transcarboxylase to acetyl-CoA to form malonyl-CoA. The protein is Acetyl-coenzyme A carboxylase carboxyl transferase subunit beta of Alcanivorax borkumensis (strain ATCC 700651 / DSM 11573 / NCIMB 13689 / SK2).